The chain runs to 168 residues: Small ribosomal subunit protein bS16 (168 aa).

The tract at residues 110-168 (LAEAEGGPSNEATQPKKKKAPAKKAASDIEATADPAGNADKSEPAAEGEDATVAGATEG) is disordered.

Belongs to the bacterial ribosomal protein bS16 family.

The polypeptide is Small ribosomal subunit protein bS16 (Mycobacterium sp. (strain JLS)).